Consider the following 727-residue polypeptide: Putative ATP-dependent RNA helicase DHX15 (727 aa).

The interval 1–41 (MSKRKHESSDSNKKAMKKQQNKIEEEEEEITNTTTTTTTTN) is disordered. Positions 31–41 (TNTTTTTTTTN) are enriched in low complexity. In terms of domain architecture, Helicase ATP-binding spans 87 to 251 (IKVIKENQVV…FENAPLIKVP (165 aa)). 100–107 (GETGSGKT) is an ATP binding site. The short motif at 198-201 (DEAH) is the DEAH box element. The Helicase C-terminal domain occupies 273-445 (AVRTVIDIHT…SVVLQLLKLG (173 aa)).

The protein belongs to the DEAD box helicase family. DEAH subfamily. DDX15/PRP43 sub-subfamily.

It localises to the nucleus. The enzyme catalyses ATP + H2O = ADP + phosphate + H(+). In terms of biological role, pre-mRNA processing factor involved in disassembly of spliceosomes after the release of mature mRNA. This Dictyostelium discoideum (Social amoeba) protein is Putative ATP-dependent RNA helicase DHX15 (dhx15).